The chain runs to 93 residues: Large ribosomal subunit protein uL23cz/uL23cy (93 aa).

The protein belongs to the universal ribosomal protein uL23 family. Part of the 50S ribosomal subunit.

It localises to the plastid. The protein localises to the chloroplast. Functionally, binds to 23S rRNA. The protein is Large ribosomal subunit protein uL23cz/uL23cy (rpl23-A) of Atropa belladonna (Belladonna).